A 339-amino-acid polypeptide reads, in one-letter code: Biotin synthase (339 aa).

One can recognise a Radical SAM core domain in the interval 55 to 282 (NAVQLSTLLS…KAVVRLSAGR (228 aa)). Residues Cys-70, Cys-74, and Cys-77 each coordinate [4Fe-4S] cluster. [2Fe-2S] cluster contacts are provided by Cys-114, Cys-145, Cys-205, and Arg-277.

The protein belongs to the radical SAM superfamily. Biotin synthase family. In terms of assembly, homodimer. It depends on [4Fe-4S] cluster as a cofactor. Requires [2Fe-2S] cluster as cofactor.

It carries out the reaction (4R,5S)-dethiobiotin + (sulfur carrier)-SH + 2 reduced [2Fe-2S]-[ferredoxin] + 2 S-adenosyl-L-methionine = (sulfur carrier)-H + biotin + 2 5'-deoxyadenosine + 2 L-methionine + 2 oxidized [2Fe-2S]-[ferredoxin]. It functions in the pathway cofactor biosynthesis; biotin biosynthesis; biotin from 7,8-diaminononanoate: step 2/2. Its function is as follows. Catalyzes the conversion of dethiobiotin (DTB) to biotin by the insertion of a sulfur atom into dethiobiotin via a radical-based mechanism. In Burkholderia vietnamiensis (strain G4 / LMG 22486) (Burkholderia cepacia (strain R1808)), this protein is Biotin synthase.